The sequence spans 422 residues: F-box/kelch-repeat protein At3g27150 (422 aa).

The F-box domain maps to 68 to 114 (LLNVPQLVYELEVEILARVPRFEYWKLKLLNKGFSRLLKSDEIFKVR). Kelch repeat units lie at residues 162–212 (ESLC…TCGT), 213–264 (VVFV…YLRG), 266–312 (FYVL…SPPL), 314–361 (AVVG…VAFK), and 366–412 (KLLV…RFNH).

This chain is F-box/kelch-repeat protein At3g27150, found in Arabidopsis thaliana (Mouse-ear cress).